We begin with the raw amino-acid sequence, 211 residues long: LexA repressor (211 aa).

The segment at residues Gln27–Asp47 is a DNA-binding region (H-T-H motif). Active-site for autocatalytic cleavage activity residues include Ser131 and Lys168.

It belongs to the peptidase S24 family. As to quaternary structure, homodimer.

The catalysed reaction is Hydrolysis of Ala-|-Gly bond in repressor LexA.. Functionally, represses a number of genes involved in the response to DNA damage (SOS response), including recA and lexA. In the presence of single-stranded DNA, RecA interacts with LexA causing an autocatalytic cleavage which disrupts the DNA-binding part of LexA, leading to derepression of the SOS regulon and eventually DNA repair. The polypeptide is LexA repressor (Xylella fastidiosa (strain 9a5c)).